Here is a 511-residue protein sequence, read N- to C-terminus: Alpha-amylase 1A (511 aa).

The first 15 residues, 1-15 (MKLFWLLFTIGFCWA), serve as a signal peptide directing secretion. Q16 carries the pyrrolidone carboxylic acid modification. Intrachain disulfides connect C43–C101, C85–C130, and C156–C175. Ca(2+)-binding residues include N115, R173, and D182. Residue R210 participates in chloride binding. D212 functions as the Nucleophile in the catalytic mechanism. A Ca(2+)-binding site is contributed by H216. The active-site Proton donor is the E248. Chloride contacts are provided by N313 and R352. N365 is subject to Deamidated asparagine; partial. Cysteines 393 and 399 form a disulfide. N427 carries the deamidated asparagine; partial; alternate modification. An N-linked (GlcNAc...) asparagine glycan is attached at N427. Cysteines 465 and 477 form a disulfide. N474 is modified (deamidated asparagine; partial). The N-linked (GlcNAc...) asparagine glycan is linked to N476.

Belongs to the glycosyl hydrolase 13 family. As to quaternary structure, monomer. Ca(2+) is required as a cofactor. It depends on chloride as a cofactor.

It is found in the secreted. It catalyses the reaction Endohydrolysis of (1-&gt;4)-alpha-D-glucosidic linkages in polysaccharides containing three or more (1-&gt;4)-alpha-linked D-glucose units.. Calcium-binding enzyme that initiates starch digestion in the oral cavity. Catalyzes the hydrolysis of internal (1-&gt;4)-alpha-D-glucosidic bonds, yielding a mixture of maltose, isomaltose, small amounts of glucose as well as small linear and branched oligosaccharides called dextrins. This is Alpha-amylase 1A from Homo sapiens (Human).